Consider the following 98-residue polypeptide: NADH-ubiquinone oxidoreductase chain 4L (98 aa).

3 helical membrane passes run 1-21, 29-49, and 61-81; these read MSLT…GLLM, SLLC…MAIL, and IILL…LVMV.

It belongs to the complex I subunit 4L family. As to quaternary structure, core subunit of respiratory chain NADH dehydrogenase (Complex I) which is composed of 45 different subunits.

It is found in the mitochondrion inner membrane. It catalyses the reaction a ubiquinone + NADH + 5 H(+)(in) = a ubiquinol + NAD(+) + 4 H(+)(out). Its function is as follows. Core subunit of the mitochondrial membrane respiratory chain NADH dehydrogenase (Complex I) which catalyzes electron transfer from NADH through the respiratory chain, using ubiquinone as an electron acceptor. Part of the enzyme membrane arm which is embedded in the lipid bilayer and involved in proton translocation. The polypeptide is NADH-ubiquinone oxidoreductase chain 4L (MT-ND4L) (Vampyressa melissa (Melissa's yellow-eared bat)).